We begin with the raw amino-acid sequence, 808 residues long: Homeobox-leucine zipper protein HDG1 (808 aa).

Positions 57–121 (LQTNGEMSRN…KRYHRHTPKQ (65 aa)) are disordered. The segment covering 79–90 (SRGEDVESRSES) has biased composition (basic and acidic residues). Basic residues predominate over residues 108 to 119 (LKKKKRYHRHTP). The homeobox DNA-binding region spans 110-169 (KKKRYHRHTPKQIQDLESVFKECAHPDEKQRLDLSRRLNLDPRQVKFWFQNRRTQMKTQI). A coiled-coil region spans residues 158–233 (FQNRRTQMKT…SRLKDELDRV (76 aa)). The 232-residue stretch at 310-541 (DFDQRSRYLD…LQRQCECLTI (232 aa)) folds into the START domain.

Belongs to the HD-ZIP homeobox family. Class IV subfamily. Interacts with CFL1. Binds with BBM. In terms of tissue distribution, expressed in trichomes forming at the base of young leaves, in endodermal cell lines around emergent lateral roots and in the epidermal layer of the stamen filament.

It is found in the nucleus. In terms of biological role, probable transcription factor. Promotes cuticle development probably by modulating the expression of the downstream genes BDG and FDH, possibly repressed in a CFL1-dependent manner. Involved, together with PDF2, in the regulation of flower organs development by promoting the expression of APETALA 3 (AP3) in the epidermis and internal cell layers of developing flowers. In opposition to BBM, seems to promote cell differentiation and giant cell identity via transcriptional repression of meristem and cell proliferation genes. This is Homeobox-leucine zipper protein HDG1 from Arabidopsis thaliana (Mouse-ear cress).